Consider the following 660-residue polypeptide: Putative ABC transporter ATP-binding MG390 (660 aa).

The 121-residue stretch at 6–126 folds into the Peptidase C39 domain; it reads QEQQNECGIC…KLWTGYAATV (121 aa). The active site involves cysteine 12. 6 helical membrane-spanning segments follow: residues 150–170, 188–208, 265–285, 290–310, 379–399, and 402–422; these read LVTF…LLAT, LVVL…LQVI, YIPN…LIGI, FLLI…YDFF, SFFQ…GIIE, and YQLS…TYAT. One can recognise an ABC transporter domain in the interval 464 to 657; sequence ISLENLSVTL…QNKINLTNYL (194 aa). ATP is bound at residue 494-501; the sequence is GQNGSGKS.

The protein belongs to the ABC transporter superfamily.

Its subcellular location is the cell membrane. The protein is Putative ABC transporter ATP-binding MG390 of Mycoplasma genitalium (strain ATCC 33530 / DSM 19775 / NCTC 10195 / G37) (Mycoplasmoides genitalium).